Here is a 624-residue protein sequence, read N- to C-terminus: Matrilin-4 (624 aa).

The signal sequence occupies residues 1 to 21 (MRGPCCWPLSLLLLFLQSWET). In terms of domain architecture, VWFA 1 spans 36 to 215 (DLVFMIDSSR…EFGLQFQGRL (180 aa)). The N-linked (GlcNAc...) asparagine glycan is linked to asparagine 71. EGF-like domains are found at residues 217-257 (GKDL…KNCL), 258-298 (ALDL…RSCR), 299-339 (AIDY…RSCR), and 340-380 (VRDF…KSCD). 12 disulfide bridges follow: cysteine 221/cysteine 232, cysteine 228/cysteine 241, cysteine 243/cysteine 256, cysteine 262/cysteine 273, cysteine 269/cysteine 282, cysteine 284/cysteine 297, cysteine 303/cysteine 314, cysteine 310/cysteine 323, cysteine 325/cysteine 338, cysteine 344/cysteine 355, cysteine 351/cysteine 364, and cysteine 366/cysteine 379. N-linked (GlcNAc...) asparagine glycosylation is present at asparagine 307. One can recognise a VWFA 2 domain in the interval 388 to 563 (DLVLLVDGSK…STMTHLLENL (176 aa)). The stretch at 590–623 (EFQGRTLGALESLTQNLARLTERLEELENQLASR) forms a coiled coil.

In terms of assembly, interacts with COMP. In terms of tissue distribution, lung, brain, sternum, kidney and heart.

Its subcellular location is the secreted. Major component of the extracellular matrix of cartilage. The chain is Matrilin-4 (Matn4) from Mus musculus (Mouse).